The primary structure comprises 124 residues: ATP synthase epsilon chain (124 aa).

It belongs to the ATPase epsilon chain family. In terms of assembly, F-type ATPases have 2 components, CF(1) - the catalytic core - and CF(0) - the membrane proton channel. CF(1) has five subunits: alpha(3), beta(3), gamma(1), delta(1), epsilon(1). CF(0) has three main subunits: a, b and c.

Its subcellular location is the cell membrane. Functionally, produces ATP from ADP in the presence of a proton gradient across the membrane. This chain is ATP synthase epsilon chain, found in Streptomyces avermitilis (strain ATCC 31267 / DSM 46492 / JCM 5070 / NBRC 14893 / NCIMB 12804 / NRRL 8165 / MA-4680).